The chain runs to 1147 residues: MADQIPLYPVRSAAAAAANRKRAAYYSAAGPRPGADRHSRYQLEDESAHLDEMPLMMSEEGFENEESDYHTLPRARIMQRKRGLEWFVCDGWKFLCTSCCGWLINICRRKKELKARTVWLGCPEKCEEKHPRNSIKNQKYNVFTFIPGVLYEQFKFFLNLYFLVISCSQFVPALKIGYLYTYWAPLGFVLAVTMTREAIDEFRRFQRDKEVNSQLYSKLTVRGKVQVKSSDIQVGDLIIVEKNQRIPSDMVFLRTSEKAGSCFIRTDQLDGETDWKLKVAVSCTQQLPALGDLFSISAYVYAQKPQMDIHSFEGTFTREDSDPPIHESLSIENTLWASTIVASGTVIGVVIYTGKETRSVMNTSNPKNKVGLLDLELNRLTKALFLALVALSIVMVTLQGFVGPWYRNLFRFLLLFSYIIPISLRVNLDMGKAVYGWMMMKDENIPGTVVRTSTIPEELGRLVYLLTDKTGTLTQNEMIFKRLHLGTVSYGADTMDEIQSHVRDSYSQMQSQAGGNNTGSTPLRKAQSSAPKVRKSVSSRIHEAVKAIVLCHNVTPVYESRAGVTEETEFAEADQDFSDENRTYQASSPDEVALVQWTESVGLTLVSRDLTSMQLKTPSGQVLSFCILQLFPFTSESKRMGVIVRDESTAEITFYMKGADVAMSPIVQYNDWLEEECGNMAREGLRTLVVAKKALTEEQYQDFESRYTQAKLSMHDRSLKVAAVVESLEREMELLCLTGVEDQLQADVRPTLEMLRNAGIKIWMLTGDKLETATCIAKSSHLVSRTQDIHIFRQVTSRGEAHLELNAFRRKHDCALVISGDSLEVCLKYYEHEFVELACQCPAVVCCRCSPTQKARIVTLLQQHTGRRTCAIGDGGNDVSMIQAADCGIGIEGKEGKQASLAADFSITQFRHIGRLLMVHGRNSYKRSAALGQFVMHRGLIISTMQAVFSSVFYFASVPLYQGFLMVGYATIYTMFPVFSLVLDQDVKPEMAMLYPELYKDLTKGRSLSFKTFLIWVLISIYQGGILMYGALVLFESEFVHVVAISFTALILTELLMVALTVRTWHWLMVVAEFLSLGCYVSSLAFLNEYFGIGRVSFGAFLDVAFITTVTFLWKVSAITVVSCLPLYVLKYLRRKLSPPSYCKLAS.

The Cytoplasmic portion of the chain corresponds to Met1–Ile146. Residues Pro147–Ser168 form a helical membrane-spanning segment. At Gln169–Ala173 the chain is on the extracellular side. A helical membrane pass occupies residues Leu174–Arg196. Over Glu197–Leu380 the chain is Cytoplasmic. A helical membrane pass occupies residues Thr381 to Phe401. Topologically, residues Val402–Leu409 are extracellular. The helical transmembrane segment at Phe410–Gly431 threads the bilayer. Over Lys432 to Ala930 the chain is Cytoplasmic. Catalysis depends on Asp468, which acts as the 4-aspartylphosphate intermediate. Asp468, Lys469, and Thr470 together coordinate ATP. Residue Asp468 participates in Mg(2+) binding. Thr470 lines the Mg(2+) pocket. The tract at residues Arg503 to Lys535 is disordered. A compositionally biased stretch (polar residues) spans Ser505 to Ala530. Positions 591, 633, 638, 657, 686, 687, 766, 767, 768, 848, and 854 each coordinate ATP. Asp874 contacts Mg(2+). ATP contacts are provided by Asn877 and Asp878. Asp878 contacts Mg(2+). The chain crosses the membrane as a helical span at residues Leu931–Ser951. Topologically, residues Val952–Gly963 are extracellular. Residues Phe964–Val982 form a helical membrane-spanning segment. Topologically, residues Leu983–Thr1012 are cytoplasmic. The helical transmembrane segment at Phe1013–Ala1031 threads the bilayer. Over Leu1032–Glu1038 the chain is Extracellular. A helical transmembrane segment spans residues Phe1039–Thr1061. The Cytoplasmic segment spans residues Val1062–Trp1067. The chain crosses the membrane as a helical span at residues Leu1068–Asn1088. The Extracellular portion of the chain corresponds to Glu1089–Ala1105. A helical transmembrane segment spans residues Phe1106–Leu1130. Over Lys1131–Ser1147 the chain is Cytoplasmic.

This sequence belongs to the cation transport ATPase (P-type) (TC 3.A.3) family. Type IV subfamily. It depends on Mg(2+) as a cofactor.

Its subcellular location is the golgi apparatus. It localises to the trans-Golgi network membrane. The catalysed reaction is ATP + H2O + phospholipidSide 1 = ADP + phosphate + phospholipidSide 2.. This Homo sapiens (Human) protein is Probable phospholipid-transporting ATPase IIB (ATP9B).